Consider the following 78-residue polypeptide: MKNGIHPEYKKLLIKVGSNIFETMSTHPIGEILMDVDFRKHPAWNKDSGNVVNQSNKSVSDFNKRFAGLSFDSKKEAS.

Belongs to the bacterial ribosomal protein bL31 family. Type A subfamily. As to quaternary structure, part of the 50S ribosomal subunit.

In terms of biological role, binds the 23S rRNA. This Rickettsia prowazekii (strain Madrid E) protein is Large ribosomal subunit protein bL31.